The primary structure comprises 162 residues: Beta-lactoglobulin-1 (162 aa).

Disulfide bonds link Cys-66-Cys-160 and Cys-106-Cys-119.

The protein belongs to the calycin superfamily. Lipocalin family. As to quaternary structure, monomer.

It is found in the secreted. Functionally, lactoglobulin is the primary component of whey, it binds retinol and is probably involved in the transport of that molecule. This Felis catus (Cat) protein is Beta-lactoglobulin-1 (LGB1).